Here is a 455-residue protein sequence, read N- to C-terminus: Chromosomal replication initiator protein DnaA 2 (455 aa).

Residues 1–95 (MLTCNDCSTW…KRSSPLVTPS (95 aa)) are domain I, interacts with DnaA modulators. Residues 96 to 112 (IAKPATEVSEENKDFQL) are domain II. The tract at residues 113–328 (KLNGAYRFDN…GAINKLTAYC (216 aa)) is domain III, AAA+ region. ATP-binding residues include Gly-157, Gly-159, Lys-160, and Thr-161. The segment at 329 to 455 (LLFNKPLTET…IAIDSPQHFV (127 aa)) is domain IV, binds dsDNA.

This sequence belongs to the DnaA family. Oligomerizes as a right-handed, spiral filament on DNA at oriC.

The protein localises to the cytoplasm. Its function is as follows. Plays an essential role in the initiation and regulation of chromosomal replication. ATP-DnaA binds to the origin of replication (oriC) to initiate formation of the DNA replication initiation complex once per cell cycle. Binds the DnaA box (a 9 base pair repeat at the origin) and separates the double-stranded (ds)DNA. Forms a right-handed helical filament on oriC DNA; dsDNA binds to the exterior of the filament while single-stranded (ss)DNA is stabiized in the filament's interior. The ATP-DnaA-oriC complex binds and stabilizes one strand of the AT-rich DNA unwinding element (DUE), permitting loading of DNA polymerase. After initiation quickly degrades to an ADP-DnaA complex that is not apt for DNA replication. Binds acidic phospholipids. The sequence is that of Chromosomal replication initiator protein DnaA 2 from Chlamydia trachomatis serovar D (strain ATCC VR-885 / DSM 19411 / UW-3/Cx).